An 807-amino-acid chain; its full sequence is Mechanosensitive cation channel TMEM63A (807 aa).

Topologically, residues 1 to 51 (MTDSPFLELWQSRAVSVREQLGLGDRPNDSYCYNSAKNSTVLQGVTFGGIP) are extracellular. N-linked (GlcNAc...) asparagine glycosylation occurs at Asn38. Residues 52-74 (TVLLIDVSCFLFLILVFSIIRRR) form a helical membrane-spanning segment. The Cytoplasmic portion of the chain corresponds to 75-134 (FWDYGRIALVSEADSEPRFQRLSSTSSSGQQDFENELGCCPWLTAIFRLHDDQILEWCGE). The chain crosses the membrane as a helical span at residues 135–167 (DAIHYLSFQRHIIFLLVVVSFLSLCVILPVNLS). Over 168–191 (GDLLDKDPYSFGRTTIANLQTDND) the chain is Extracellular. The chain crosses the membrane as a helical span at residues 192–217 (LLWLHTIFAVIYLFLTVGFMRHHTQS). Topologically, residues 218 to 416 (IKYKEENLVR…CWKNLSIQGL (199 aa)) are cytoplasmic. Residues 219 to 414 (KYKEENLVRR…DICWKNLSIQ (196 aa)) are intracellular linker IL2; confers mechanosensitivity. The helical transmembrane segment at 417-444 (RWWLQWLGINFTLFLGLFFLTTPSIILS) threads the bilayer. The Extracellular segment spans residues 445–462 (TMDKFNVTKPIHALNNPI). The N-linked (GlcNAc...) asparagine glycan is linked to Asn450. A helical membrane pass occupies residues 463–490 (ISQFFPTLLLWSFSALLPSIVYYSTLLE). Residues 491–495 (SHWTK) are Cytoplasmic-facing. A helical membrane pass occupies residues 496 to 532 (SGENQIMMTKVYIFLIFMVLILPSLGLTSLDFFFRWL). Over 533–554 (FDKTSSEASIRLECVFLPDQGA) the chain is Extracellular. A helical membrane pass occupies residues 555–586 (FFVNYVIASAFIGNGMELLRLPGLILYTFRMI). The gating helix stretch occupies residues 555–586 (FFVNYVIASAFIGNGMELLRLPGLILYTFRMI). Topologically, residues 587-606 (MAKTAADRRNVKQNQAFQYE) are cytoplasmic. A helical transmembrane segment spans residues 607–624 (FGAMYAWMLCVFTVIMAY). The Extracellular segment spans residues 625 to 628 (SITC). A helical transmembrane segment spans residues 629–651 (PIIAPFGLIYILLKHMVDRHNLY). Residues 652–661 (FIYLPAKLEK) are Cytoplasmic-facing. Residues 662–689 (GIHFAAVNQALAAPILCLFWLYFFSFLR) traverse the membrane as a helical segment. At 690-694 (LGMKA) the chain is on the extracellular side. The helical transmembrane segment at 695 to 709 (PATLFTFLVVLLTIL) threads the bilayer. The Cytoplasmic portion of the chain corresponds to 710 to 807 (VCLAHTCFGY…GSVAAAPQEA (98 aa)). A Phosphoserine modification is found at Ser739.

It belongs to the CSC1 (TC 1.A.17) family. Monomer. In terms of processing, N-Glycosylated.

The protein localises to the lysosome membrane. Its subcellular location is the early endosome membrane. It localises to the cell membrane. The catalysed reaction is Ca(2+)(in) = Ca(2+)(out). Functionally, mechanosensitive cation channel with low conductance and high activation threshold. In contrast to TMEM63B, does not show phospholipid scramblase activity. Acts as a regulator of lysosomal morphology by mediating lysosomal mechanosensitivity. Important for the baby's first breath and respiration throughout life. Upon lung inflation conducts cation currents in alveolar type 1 and 2 cells triggering lamellar body exocytosis and surfactant secretion into airspace. Also acts as an osmosensitive cation channel preferentially activated by hypotonic stress. In Pongo abelii (Sumatran orangutan), this protein is Mechanosensitive cation channel TMEM63A (TMEM63A).